The following is a 700-amino-acid chain: Phenoloxidase 8 (700 aa).

Residues 1 to 51 (MATLTQKFHGLLQHPLEPLFLPKNDGTLFYDLPERFLTSRYSPIGQNLANR) constitute a propeptide that is removed on maturation. N-linked (GlcNAc...) asparagine glycosylation is found at asparagine 64 and asparagine 198. Positions 223, 227, and 252 each coordinate Cu cation. Asparagine 295 is a glycosylation site (N-linked (GlcNAc...) asparagine). The active-site Proton acceptor is glutamate 364. 3 residues coordinate Cu cation: histidine 379, histidine 383, and histidine 419. N-linked (GlcNAc...) asparagine glycosylation is found at asparagine 445, asparagine 507, and asparagine 565. Disulfide bonds link cysteine 592-cysteine 636 and cysteine 594-cysteine 643.

This sequence belongs to the tyrosinase family. Homodimer. The cofactor is Cu(2+). Post-translationally, upon activation, a trypsin type protease cleaves prophenol oxidase to yield the active enzyme.

The protein resides in the secreted. It catalyses the reaction 2 tyramine + O2 = 2 dopamine. It carries out the reaction 2 dopamine + O2 = 2 dopamine quinone + 2 H2O. In terms of biological role, this is a copper-containing oxidase that functions in the formation of pigments such as melanins and other polyphenolic compounds. Catalyzes the oxidation of o-diphenols such as dopamine. Also oxidizes monophenols such as tyramine. The protein is Phenoloxidase 8 of Anopheles gambiae (African malaria mosquito).